The primary structure comprises 382 residues: Mannitol-1-phosphate 5-dehydrogenase (382 aa).

An NAD(+)-binding site is contributed by 3 to 14 (VLHFGAGNIGRG).

Belongs to the mannitol dehydrogenase family.

The enzyme catalyses D-mannitol 1-phosphate + NAD(+) = beta-D-fructose 6-phosphate + NADH + H(+). The protein is Mannitol-1-phosphate 5-dehydrogenase of Sodalis glossinidius (strain morsitans).